Reading from the N-terminus, the 278-residue chain is Pantothenate synthetase (278 aa).

ATP is bound at residue 26–33; sequence MGNLHEGH. Catalysis depends on histidine 33, which acts as the Proton donor. Glutamine 57 serves as a coordination point for (R)-pantoate. Glutamine 57 contributes to the beta-alanine binding site. An ATP-binding site is contributed by 144–147; sequence GKKD. Position 150 (glutamine 150) interacts with (R)-pantoate. ATP is bound by residues glycine 173 and 181–184; that span reads LSSR.

It belongs to the pantothenate synthetase family. As to quaternary structure, homodimer.

It is found in the cytoplasm. The catalysed reaction is (R)-pantoate + beta-alanine + ATP = (R)-pantothenate + AMP + diphosphate + H(+). Its pathway is cofactor biosynthesis; (R)-pantothenate biosynthesis; (R)-pantothenate from (R)-pantoate and beta-alanine: step 1/1. Its function is as follows. Catalyzes the condensation of pantoate with beta-alanine in an ATP-dependent reaction via a pantoyl-adenylate intermediate. The chain is Pantothenate synthetase from Neisseria meningitidis serogroup A / serotype 4A (strain DSM 15465 / Z2491).